Consider the following 630-residue polypeptide: Polypeptide N-acetylgalactosaminyltransferase 5 (630 aa).

The Cytoplasmic segment spans residues 1 to 20; it reads MTFSTFTRKMRGRMRSNTCR. The chain crosses the membrane as a helical; Signal-anchor for type II membrane protein span at residues 21 to 38; the sequence is IVLLTSLVWVIFDFVLIA. Residues 39 to 630 lie on the Lumenal side of the membrane; the sequence is RYSDCIGKDG…MESKFKWQAH (592 aa). A glycan (N-linked (GlcNAc...) asparagine) is linked at asparagine 166. Intrachain disulfides connect cysteine 177–cysteine 410, cysteine 401–cysteine 479, cysteine 513–cysteine 530, cysteine 553–cysteine 568, and cysteine 594–cysteine 611. Positions 186 to 296 are catalytic subdomain A; the sequence is LPTTSIVIVF…EGWLEPLLAR (111 aa). The substrate site is built by aspartate 227 and arginine 257. Residues aspartate 280 and histidine 282 each contribute to the Mn(2+) site. Residues 356–418 are catalytic subdomain B; sequence PLRTPTMAGG…PCSHVGHVFR (63 aa). Tryptophan 387 is a substrate binding site. Histidine 415 is a binding site for Mn(2+). Substrate-binding residues include arginine 418 and tyrosine 423. Residues 500 to 622 enclose the Ricin B-type lectin domain; it reads YYLGEIRNAE…YGKGQQWLME (123 aa).

This sequence belongs to the glycosyltransferase 2 family. GalNAc-T subfamily. The cofactor is Mn(2+). Expressed during oogenesis, in the somatically derived follicle cells that surround the developing oocyte, which are involved in the maturation of the oocyte and construction of the egg shell, as well as playing a role in subsequent embryonic pattern formation. During embryonic stages 9-11, expressed in the primordium of the foregut, midgut and hindgut. Expressed in salivary glands from embryonic stage 12 onwards. During embryonic stages 12-13, expressed in the posterior midgut and hindgut. During embryonic stages 14-17, expressed in the hindgut and the posterior spiracles. Expression is also detected in the epidermis and antennomaxillary complex at embryonic stages 16-17. In third instar larvae, ubiquitously expressed in wing, eye-antennal, leg and haltere imaginal disks.

The protein resides in the golgi apparatus membrane. It carries out the reaction L-seryl-[protein] + UDP-N-acetyl-alpha-D-galactosamine = a 3-O-[N-acetyl-alpha-D-galactosaminyl]-L-seryl-[protein] + UDP + H(+). It catalyses the reaction L-threonyl-[protein] + UDP-N-acetyl-alpha-D-galactosamine = a 3-O-[N-acetyl-alpha-D-galactosaminyl]-L-threonyl-[protein] + UDP + H(+). The protein operates within protein modification; protein glycosylation. In terms of biological role, catalyzes the initial reaction in O-linked oligosaccharide biosynthesis, the transfer of an N-acetyl-D-galactosamine residue to a serine or threonine residue on the protein receptor. It can both act as a peptide transferase that transfers GalNAc onto unmodified peptide substrates, and as a glycopeptide transferase that requires the prior addition of a GalNAc on a peptide before adding additional GalNAc moieties. Prefers EA2 as substrate. In the larval midgut, required for O-glycosylation of apical and luminal proteins within copper cells enabling proper gut acidification. This Drosophila melanogaster (Fruit fly) protein is Polypeptide N-acetylgalactosaminyltransferase 5.